The primary structure comprises 476 residues: Xylan O-acetyltransferase 4 (476 aa).

Positions M1–S37 are disordered. Residues M1 to P63 lie on the Cytoplasmic side of the membrane. The span at S8–T18 shows a compositional bias: low complexity. Positions S19–A31 are enriched in pro residues. The helical; Signal-anchor for type II membrane protein transmembrane segment at V64–G80 threads the bilayer. Topologically, residues E81–Q476 are lumenal. Residues N103, N128, and N167 are each glycosylated (N-linked (GlcNAc...) asparagine). 4 cysteine pairs are disulfide-bonded: C117/C168, C139/C204, C148/C444, and C360/C440. A GDS motif motif is present at residues G191 to S193. The active-site Nucleophile is the S193. N-linked (GlcNAc...) asparagine glycans are attached at residues N299 and N369. The active-site Proton donor is D439. The short motif at D439 to H442 is the DXXH motif element. H442 functions as the Proton acceptor in the catalytic mechanism.

This sequence belongs to the PC-esterase family. TBL subfamily. In terms of tissue distribution, highly expressed in leaves. Expressed in roots, stems and inflorescences.

The protein localises to the golgi apparatus membrane. Xylan acetyltransferase required for 2-O- and 3-O-monoacetylation of xylosyl residues in xylan. Catalyzes the 2-O-acetylation of xylan, followed by nonenzymatic acetyl migration to the O-3 position, resulting in products that are monoacetylated at both O-2 and O-3 positions. This chain is Xylan O-acetyltransferase 4, found in Oryza sativa subsp. japonica (Rice).